Reading from the N-terminus, the 156-residue chain is 6,7-dimethyl-8-ribityllumazine synthase (156 aa).

5-amino-6-(D-ribitylamino)uracil contacts are provided by residues F22, A57–E59, and T81–I83. Residue G86 to T87 coordinates (2S)-2-hydroxy-3-oxobutyl phosphate. H89 acts as the Proton donor in catalysis. 5-amino-6-(D-ribitylamino)uracil is bound at residue F114. Position 128 (R128) interacts with (2S)-2-hydroxy-3-oxobutyl phosphate.

This sequence belongs to the DMRL synthase family. In terms of assembly, forms an icosahedral capsid composed of 60 subunits, arranged as a dodecamer of pentamers.

The catalysed reaction is (2S)-2-hydroxy-3-oxobutyl phosphate + 5-amino-6-(D-ribitylamino)uracil = 6,7-dimethyl-8-(1-D-ribityl)lumazine + phosphate + 2 H2O + H(+). It functions in the pathway cofactor biosynthesis; riboflavin biosynthesis; riboflavin from 2-hydroxy-3-oxobutyl phosphate and 5-amino-6-(D-ribitylamino)uracil: step 1/2. Its function is as follows. Catalyzes the formation of 6,7-dimethyl-8-ribityllumazine by condensation of 5-amino-6-(D-ribitylamino)uracil with 3,4-dihydroxy-2-butanone 4-phosphate. This is the penultimate step in the biosynthesis of riboflavin. This is 6,7-dimethyl-8-ribityllumazine synthase from Enterobacter sp. (strain 638).